The primary structure comprises 404 residues: Glucose-1-phosphate adenylyltransferase (404 aa).

Alpha-D-glucose 1-phosphate is bound by residues Tyr-99, Gly-164, 179-180, and Ser-197; that span reads EK.

It belongs to the bacterial/plant glucose-1-phosphate adenylyltransferase family. As to quaternary structure, homotetramer.

The catalysed reaction is alpha-D-glucose 1-phosphate + ATP + H(+) = ADP-alpha-D-glucose + diphosphate. The protein operates within glycan biosynthesis; glycogen biosynthesis. Involved in the biosynthesis of ADP-glucose, a building block required for the elongation reactions to produce glycogen. Catalyzes the reaction between ATP and alpha-D-glucose 1-phosphate (G1P) to produce pyrophosphate and ADP-Glc. The polypeptide is Glucose-1-phosphate adenylyltransferase (Nocardia farcinica (strain IFM 10152)).